Here is a 378-residue protein sequence, read N- to C-terminus: Sphingosine 1-phosphate receptor 3 (378 aa).

Residues 1–44 (MATTHAQGHQPVLGNDTLREHYDYVGKLAGRLRDPPEGGTLITT) are Extracellular-facing. A glycan (N-linked (GlcNAc...) asparagine) is linked at N15. A helical membrane pass occupies residues 45–65 (ILFLVTCSFIVLENLMVLIAI). Residues 66-74 (WKNNKFHNR) are Cytoplasmic-facing. The chain crosses the membrane as a helical span at residues 75–95 (MYFFIGNLALCDLLAGIAYKV). Residues 96-115 (NILMSGRKTFSLSPTVWFLR) are Extracellular-facing. Residues 116–136 (EGSMFVALGASTCSLLAIAIE) traverse the membrane as a helical segment. Residues 137–154 (RHLTMIKMRPYDANKKHR) are Cytoplasmic-facing. A helical membrane pass occupies residues 155–175 (VFLLIGMCWLIAFSLGALPIL). Residues 176–196 (GWNCLENFPDCSTILPLYSKK) are Extracellular-facing. A helical transmembrane segment spans residues 197-217 (YIAFLISIFTAILVTIVILYA). The Cytoplasmic segment spans residues 218-244 (RIYCLVKSSSRRVANHNSERSMALLRT). Residues 245–265 (VVIVVSVFIACWSPLFILFLI) form a helical membrane-spanning segment. Residues 266–281 (DVACRAKECSILFKSQ) lie on the Extracellular side of the membrane. Residues 282-302 (WFIMLAVLNSAMNPVIYTLAS) traverse the membrane as a helical segment. Topologically, residues 303–378 (KEMRRAFFRL…RSFQNGVLCK (76 aa)) are cytoplasmic. The disordered stretch occupies residues 323–354 (TQASPMQPALDPSRSKSSSSNNSSHSPKVKED). S326 is modified (phosphoserine). Low complexity predominate over residues 337–348 (SKSSSSNNSSHS).

It belongs to the G-protein coupled receptor 1 family. In terms of tissue distribution, most abundant in heart, lung, kidney and spleen; low but detectable in brain, thymus, muscle and testis; and nearly undetectable in liver, stomach, and intestine. Expressed in embryonic lung from embryonic day 14-18. Also abundantly detected in embryonic nasal cartilage, sphenoid bone, vena cava, Meckel's cartilage/incisor teeth, genital tubercle and bladder.

Its subcellular location is the cell membrane. Functionally, receptor for the lysosphingolipid sphingosine 1-phosphate (S1P). S1P is a bioactive lysophospholipid that elicits diverse physiological effect on most types of cells and tissues. This Mus musculus (Mouse) protein is Sphingosine 1-phosphate receptor 3 (S1pr3).